A 605-amino-acid chain; its full sequence is Microtubule-associated protein VP10 (605 aa).

As to quaternary structure, interacts with VP1.

Its subcellular location is the virion. The protein resides in the host cytoplasm. It localises to the host cytoskeleton. Its function is as follows. Minor inner capsid component. Displays NTPase and RNA 5'-triphosphatase (RTPase) activities. May function as a cofactor of polymerase VP1. Associates with microtubules and plays a role in the formation, structural organization and morphology of viral inclusions, where the assembly of cores and the replication of viral RNA occur. This Colorado tick fever virus (strain USA/Florio N-7180) (CTFV) protein is Microtubule-associated protein VP10.